A 571-amino-acid chain; its full sequence is Proline--tRNA ligase (571 aa).

It belongs to the class-II aminoacyl-tRNA synthetase family. ProS type 1 subfamily. In terms of assembly, homodimer.

The protein localises to the cytoplasm. The catalysed reaction is tRNA(Pro) + L-proline + ATP = L-prolyl-tRNA(Pro) + AMP + diphosphate. Catalyzes the attachment of proline to tRNA(Pro) in a two-step reaction: proline is first activated by ATP to form Pro-AMP and then transferred to the acceptor end of tRNA(Pro). As ProRS can inadvertently accommodate and process non-cognate amino acids such as alanine and cysteine, to avoid such errors it has two additional distinct editing activities against alanine. One activity is designated as 'pretransfer' editing and involves the tRNA(Pro)-independent hydrolysis of activated Ala-AMP. The other activity is designated 'posttransfer' editing and involves deacylation of mischarged Ala-tRNA(Pro). The misacylated Cys-tRNA(Pro) is not edited by ProRS. This chain is Proline--tRNA ligase, found in Vibrio vulnificus (strain YJ016).